The sequence spans 102 residues: Large ribosomal subunit protein bL21 (102 aa).

It belongs to the bacterial ribosomal protein bL21 family. In terms of assembly, part of the 50S ribosomal subunit. Contacts protein L20.

In terms of biological role, this protein binds to 23S rRNA in the presence of protein L20. The protein is Large ribosomal subunit protein bL21 of Latilactobacillus sakei subsp. sakei (strain 23K) (Lactobacillus sakei subsp. sakei).